A 997-amino-acid chain; its full sequence is MDYNVKDFGALGDGVSDDTAAIQAAIDAAYAAGGGTVYLPAGEYRVSGGEEPSDGCLTIKSNVHIVGAGMGETVIKLVDGWDQDVTGIVRSAYGEETSNFGMSDLTLDGNRDNTSGKVDGWFNGYIPGEDGADRDVTLERVEIREMSGYGFDPHEQTINLTIRDSVAHDNGLDGFVADFQIGGVFENNVSYNNDRHGFNIVTSTNDFVLSNNVAYGNGGAGLVVQRGSSDVAHPYDILIDGGAYYDNGLEGVQIKMAHDVTLQNAEIYGNGLYGVRVYGAEDVQILDNYIHDNSQNGSYAEILLQSYDDTAGVSGNFYTTTGTWIEGNTIVGSANSTYGIQERDDGTDYSSLYANSVSNVQNGSVRLYGANSVVSDLPGTGQQATLEGTAGNDTLGGSDAHETLLGLDGNDRLNGGAGNDILDGGAGRDNLTGGAGADLFRVSARTDSYRTDSASFNDLITDFDASQDRIDLSALGFTGLGDGYNGTLLLQVSADGSRTYLKSLEADAEGRRFEIALDGNFAGLLGAGNLLFERTAIEGDAGDNALLGTSAAETLLGHAGNDTLDGGAGDDILVGGAGRDSLTGGAGADVFRFDALSDSQRNYDIGDNQGDRIADFAVGEDKLDVSALGFTGLGDGYNGTLALVLNSAGDRTYVKSYENGADGYRFEFSLDGNYLELLGNEDFIFATPSGQQLLEGSAGNDSLQGTAADEVIHGGGGRDTLAGGAGADVFRFSELTDSYRDSASYADLITDFDASEDRIDLSGLGFSGLGNGYGGTLALQVNSAGTRTYLKSFETNAAGERFEIALDGDLSALGGANLILDARTVLAGGDGNDTLSGSSAAEELLGGVGNDSLDGGAGNDILDGGAGRDTLSGGSGSDIFRFGGALDSFRNYASGTNGTDSITDFTPGEDLIDLSVLGYTGLGDGYNGTLAIVLNDAGTKTYLKNRESDAEGNQFEIALEGNHADQLDASDFIFATAAATTGIEVVGGSGTQTDQLA.

PbH1 repeat units lie at residues 133–155 (DRDV…DPHE), 157–179 (TINL…VADF), 180–202 (QIGG…NIVT), 204–226 (TNDF…VVQR), 257–279 (AHDV…RVYG), 280–315 (AEDV…GVSG), and 320–359 (TTGT…SVSN). Hemolysin-type calcium-binding repeat units lie at residues 388–403 (GTAG…AHET), 406–422 (GLDG…NDIL), 424–439 (GGAG…GADL), 557–573 (GHAG…DDIL), 574–591 (VGGA…ADVF), 696–711 (GSAG…ADEV), 713–730 (HGGG…ADVF), 828–839 (GGDGNDTLSGSS), 846–862 (GGVG…NDIL), and 864–880 (GGAG…SDIF).

It belongs to the D-mannuronate C5-epimerase family. Ca(2+) serves as cofactor.

It localises to the secreted. The enzyme catalyses [(1-&gt;4)-beta-D-mannuronosyl](n) = [alginate](n). It participates in glycan biosynthesis; alginate biosynthesis. Its activity is regulated as follows. Inhibited by zinc. Its function is as follows. Converts beta-D-mannuronic acid (M) to alpha-L-guluronic acid (G), producing a polymer with gel-forming capacity, required for the formation of the cyst coat. The protein is Mannuronan C5-epimerase AlgE2 of Azotobacter vinelandii.